Here is a 101-residue protein sequence, read N- to C-terminus: Small ribosomal subunit protein uS14 (101 aa).

Belongs to the universal ribosomal protein uS14 family. Part of the 30S ribosomal subunit. Contacts proteins S3 and S10.

Binds 16S rRNA, required for the assembly of 30S particles and may also be responsible for determining the conformation of the 16S rRNA at the A site. The polypeptide is Small ribosomal subunit protein uS14 (Aliivibrio fischeri (strain ATCC 700601 / ES114) (Vibrio fischeri)).